Here is a 302-residue protein sequence, read N- to C-terminus: Acetylglutamate kinase (302 aa).

Residues 67–68 (GG), arginine 89, and asparagine 194 each bind substrate.

Belongs to the acetylglutamate kinase family. ArgB subfamily.

The protein localises to the cytoplasm. The enzyme catalyses N-acetyl-L-glutamate + ATP = N-acetyl-L-glutamyl 5-phosphate + ADP. It participates in amino-acid biosynthesis; L-arginine biosynthesis; N(2)-acetyl-L-ornithine from L-glutamate: step 2/4. In terms of biological role, catalyzes the ATP-dependent phosphorylation of N-acetyl-L-glutamate. The chain is Acetylglutamate kinase from Hahella chejuensis (strain KCTC 2396).